The chain runs to 400 residues: Peroxisome biogenesis factor 16 (400 aa).

A disordered region spans residues Q176–R226. Low complexity predominate over residues I190 to N224.

Belongs to the peroxin-16 family.

It localises to the cytoplasm. Its function is as follows. Required for peroxisome membrane biogenesis. The protein is Peroxisome biogenesis factor 16 (pex16) of Dictyostelium discoideum (Social amoeba).